Reading from the N-terminus, the 346-residue chain is Putative agmatine deiminase (346 aa).

Cys338 functions as the Amidino-cysteine intermediate in the catalytic mechanism.

Belongs to the agmatine deiminase family.

The enzyme catalyses agmatine + H2O = N-carbamoylputrescine + NH4(+). In Streptomyces avermitilis (strain ATCC 31267 / DSM 46492 / JCM 5070 / NBRC 14893 / NCIMB 12804 / NRRL 8165 / MA-4680), this protein is Putative agmatine deiminase.